A 345-amino-acid chain; its full sequence is Protein-glutamate methylesterase/protein-glutamine glutaminase 1 (345 aa).

The region spanning 8–123 (SVLVIDDSAH…FEAMEALRVE (116 aa)) is the Response regulatory domain. Asp-59 bears the 4-aspartylphosphate mark. A CheB-type methylesterase domain is found at 151-344 (AGEPPLVVAV…PALAALARRR (194 aa)). Catalysis depends on residues Ser-163, His-190, and Asp-286.

This sequence belongs to the CheB family. Phosphorylated by CheA. Phosphorylation of the N-terminal regulatory domain activates the methylesterase activity.

It is found in the cytoplasm. It carries out the reaction [protein]-L-glutamate 5-O-methyl ester + H2O = L-glutamyl-[protein] + methanol + H(+). It catalyses the reaction L-glutaminyl-[protein] + H2O = L-glutamyl-[protein] + NH4(+). Its function is as follows. Involved in chemotaxis. Part of a chemotaxis signal transduction system that modulates chemotaxis in response to various stimuli. Catalyzes the demethylation of specific methylglutamate residues introduced into the chemoreceptors (methyl-accepting chemotaxis proteins or MCP) by CheR. Also mediates the irreversible deamidation of specific glutamine residues to glutamic acid. This chain is Protein-glutamate methylesterase/protein-glutamine glutaminase 1, found in Myxococcus xanthus (strain DK1622).